We begin with the raw amino-acid sequence, 373 residues long: MRKDLLSQVKRIVIKVGSGVIFGQDGLDLDVIGSLSRDICALLSQGYEVVLVSSGAVATGKGELGIVGRPPTIPLKQAAAAIGQSRLMRAWKDAFRPCGRCVGQILLTRDDLANRRRFLNARNTLMTLLEYGVVPVINENDTVVVEEIRFGDNDNLSALTTSLAEADLLIILSDVNGLYDSNPKTNPAARKFSVIERITEDIEQMAGGAGSVVGTGGMATKVEAAKRATLYGVGTIIVDGRQAGVLPKLMAGEELGTFFLPVPQHMTARKHWISFSKASRGKLLVDEGARRAVAEKGKSLLPSGIFSIEGKFDRGDAVRICDAEGRVFAKGIASYSRQELERIMGRNSSEIEVVLGYKYGDEVVHRDNLVVKK.

K15 contributes to the ATP binding site. Substrate contacts are provided by S54, D141, and N153. ATP-binding positions include 173–174 and 215–221; these read SD and TGGMATK. One can recognise a PUA domain in the interval 280–358; that stretch reads RGKLLVDEGA…SEIEVVLGYK (79 aa).

It belongs to the glutamate 5-kinase family.

The protein localises to the cytoplasm. The catalysed reaction is L-glutamate + ATP = L-glutamyl 5-phosphate + ADP. Its pathway is amino-acid biosynthesis; L-proline biosynthesis; L-glutamate 5-semialdehyde from L-glutamate: step 1/2. Catalyzes the transfer of a phosphate group to glutamate to form L-glutamate 5-phosphate. In Syntrophotalea carbinolica (strain DSM 2380 / NBRC 103641 / GraBd1) (Pelobacter carbinolicus), this protein is Glutamate 5-kinase.